A 658-amino-acid chain; its full sequence is Glycogen debranching enzyme (658 aa).

The Nucleophile role is filled by D335. E370 acts as the Proton donor in catalysis. The segment covering 457 to 468 (NDANGEGNRDGT) has biased composition (basic and acidic residues). A disordered region spans residues 457–478 (NDANGEGNRDGTDSNFSNNHGT).

Belongs to the glycosyl hydrolase 13 family.

The enzyme catalyses Hydrolysis of (1-&gt;6)-alpha-D-glucosidic linkages to branches with degrees of polymerization of three or four glucose residues in limit dextrin.. The protein operates within glycan degradation; glycogen degradation. Removes maltotriose and maltotetraose chains that are attached by 1,6-alpha-linkage to the limit dextrin main chain, generating a debranched limit dextrin. The sequence is that of Glycogen debranching enzyme from Pectobacterium carotovorum subsp. carotovorum (strain PC1).